We begin with the raw amino-acid sequence, 360 residues long: Probable L-asparaginase 1 (360 aa).

The N-terminal stretch at 1-16 (MWRSIISFLFFSVALC) is a signal peptide. Residues asparagine 27, asparagine 35, and asparagine 40 are each glycosylated (N-linked (GlcNAc...) asparagine). Residues 39 to 359 (PNVTIFAMGG…QNITDIFSLE (321 aa)) enclose the Asparaginase/glutaminase domain. Threonine 49 (O-isoaspartyl threonine intermediate) is an active-site residue. An N-linked (GlcNAc...) asparagine glycan is attached at asparagine 82. Residue serine 96 participates in substrate binding. Residue asparagine 106 is glycosylated (N-linked (GlcNAc...) asparagine). Residue 129 to 130 (TD) coordinates substrate. N-linked (GlcNAc...) asparagine glycans are attached at residues asparagine 144, asparagine 179, asparagine 246, asparagine 302, and asparagine 351.

The protein belongs to the asparaginase 1 family.

It is found in the secreted. The protein resides in the cell wall. The enzyme catalyses L-asparagine + H2O = L-aspartate + NH4(+). In Schizosaccharomyces pombe (strain 972 / ATCC 24843) (Fission yeast), this protein is Probable L-asparaginase 1.